A 316-amino-acid polypeptide reads, in one-letter code: Porphobilinogen deaminase (316 aa).

An S-(dipyrrolylmethanemethyl)cysteine modification is found at Cys-245.

It belongs to the HMBS family. Monomer. It depends on dipyrromethane as a cofactor.

It catalyses the reaction 4 porphobilinogen + H2O = hydroxymethylbilane + 4 NH4(+). The protein operates within porphyrin-containing compound metabolism; protoporphyrin-IX biosynthesis; coproporphyrinogen-III from 5-aminolevulinate: step 2/4. It functions in the pathway porphyrin-containing compound metabolism; chlorophyll biosynthesis. In terms of biological role, tetrapolymerization of the monopyrrole PBG into the hydroxymethylbilane pre-uroporphyrinogen in several discrete steps. The polypeptide is Porphobilinogen deaminase (Synechococcus sp. (strain CC9311)).